A 228-amino-acid chain; its full sequence is Geranylgeranylglyceryl phosphate synthase (228 aa).

K11 is a binding site for sn-glycerol 1-phosphate. Residues D13 and T39 each coordinate Mg(2+). Residues 159 to 164, G189, and 209 to 210 contribute to the sn-glycerol 1-phosphate site; these read YIEYSG and GN.

It belongs to the GGGP/HepGP synthase family. Group I subfamily. The cofactor is Mg(2+).

The protein resides in the cytoplasm. The catalysed reaction is sn-glycerol 1-phosphate + (2E,6E,10E)-geranylgeranyl diphosphate = sn-3-O-(geranylgeranyl)glycerol 1-phosphate + diphosphate. It participates in membrane lipid metabolism; glycerophospholipid metabolism. Functionally, prenyltransferase that catalyzes the transfer of the geranylgeranyl moiety of geranylgeranyl diphosphate (GGPP) to the C3 hydroxyl of sn-glycerol-1-phosphate (G1P). This reaction is the first ether-bond-formation step in the biosynthesis of archaeal membrane lipids. This chain is Geranylgeranylglyceryl phosphate synthase, found in Methanoregula boonei (strain DSM 21154 / JCM 14090 / 6A8).